The primary structure comprises 283 residues: Pantoate--beta-alanine ligase (283 aa).

This sequence belongs to the pantothenate synthetase family.

The catalysed reaction is (R)-pantoate + beta-alanine + ATP = (R)-pantothenate + AMP + diphosphate + H(+). Its pathway is cofactor biosynthesis; (R)-pantothenate biosynthesis; (R)-pantothenate from (R)-pantoate and beta-alanine: step 1/1. The sequence is that of Pantoate--beta-alanine ligase (pan6) from Schizosaccharomyces pombe (strain 972 / ATCC 24843) (Fission yeast).